Consider the following 219-residue polypeptide: Large ribosomal subunit protein uL4 (219 aa).

Residues 43 to 101 (AAARQGTHKTKRRGEVRGGGKKPYRQKGTGRARQGSTRAPQFAGGGVVHGPQPRDYSQR) are disordered. A compositionally biased stretch (basic residues) spans 61 to 72 (GGKKPYRQKGTG).

Belongs to the universal ribosomal protein uL4 family. As to quaternary structure, part of the 50S ribosomal subunit.

Its function is as follows. One of the primary rRNA binding proteins, this protein initially binds near the 5'-end of the 23S rRNA. It is important during the early stages of 50S assembly. It makes multiple contacts with different domains of the 23S rRNA in the assembled 50S subunit and ribosome. In terms of biological role, forms part of the polypeptide exit tunnel. The chain is Large ribosomal subunit protein uL4 from Streptomyces coelicolor (strain ATCC BAA-471 / A3(2) / M145).